Here is a 932-residue protein sequence, read N- to C-terminus: Isoleucine--tRNA ligase (932 aa).

The 'HIGH' region motif lies at 57–67; sequence PYANGNIHLGH. E552 provides a ligand contact to L-isoleucyl-5'-AMP. Positions 593 to 597 match the 'KMSKS' region motif; the sequence is KMSKS. Residue K596 coordinates ATP. Residues C889, C892, C911, and C914 each contribute to the Zn(2+) site.

It belongs to the class-I aminoacyl-tRNA synthetase family. IleS type 1 subfamily. In terms of assembly, monomer. Requires Zn(2+) as cofactor.

The protein localises to the cytoplasm. The catalysed reaction is tRNA(Ile) + L-isoleucine + ATP = L-isoleucyl-tRNA(Ile) + AMP + diphosphate. Functionally, catalyzes the attachment of isoleucine to tRNA(Ile). As IleRS can inadvertently accommodate and process structurally similar amino acids such as valine, to avoid such errors it has two additional distinct tRNA(Ile)-dependent editing activities. One activity is designated as 'pretransfer' editing and involves the hydrolysis of activated Val-AMP. The other activity is designated 'posttransfer' editing and involves deacylation of mischarged Val-tRNA(Ile). This chain is Isoleucine--tRNA ligase, found in Lactococcus lactis subsp. lactis (strain IL1403) (Streptococcus lactis).